A 101-amino-acid chain; its full sequence is Small ribosomal subunit protein uS14A (101 aa).

The interval 31–74 (IRKPSTPEADRAAAQAALQRLPRDASPVRLRNRDAADGRPRGHL) is disordered. Residues 61-70 (RNRDAADGRP) are compositionally biased toward basic and acidic residues.

Belongs to the universal ribosomal protein uS14 family. As to quaternary structure, part of the 30S ribosomal subunit. Contacts proteins S3 and S10.

Its function is as follows. Binds 16S rRNA, required for the assembly of 30S particles and may also be responsible for determining the conformation of the 16S rRNA at the A site. The chain is Small ribosomal subunit protein uS14A from Nocardia farcinica (strain IFM 10152).